Reading from the N-terminus, the 381-residue chain is 1-deoxy-D-xylulose 5-phosphate reductoisomerase (381 aa).

The NADPH site is built by T11, G12, S13, I14, K36, N37, and N121. K122 contacts 1-deoxy-D-xylulose 5-phosphate. Residue E123 participates in NADPH binding. D147 serves as a coordination point for Mn(2+). The 1-deoxy-D-xylulose 5-phosphate site is built by S148, E149, S173, and H196. E149 contacts Mn(2+). G202 lines the NADPH pocket. 4 residues coordinate 1-deoxy-D-xylulose 5-phosphate: S209, N214, K215, and E218. Residue E218 coordinates Mn(2+).

It belongs to the DXR family. The cofactor is Mg(2+). It depends on Mn(2+) as a cofactor.

The enzyme catalyses 2-C-methyl-D-erythritol 4-phosphate + NADP(+) = 1-deoxy-D-xylulose 5-phosphate + NADPH + H(+). It functions in the pathway isoprenoid biosynthesis; isopentenyl diphosphate biosynthesis via DXP pathway; isopentenyl diphosphate from 1-deoxy-D-xylulose 5-phosphate: step 1/6. Catalyzes the NADPH-dependent rearrangement and reduction of 1-deoxy-D-xylulose-5-phosphate (DXP) to 2-C-methyl-D-erythritol 4-phosphate (MEP). The sequence is that of 1-deoxy-D-xylulose 5-phosphate reductoisomerase from Acetivibrio thermocellus (strain ATCC 27405 / DSM 1237 / JCM 9322 / NBRC 103400 / NCIMB 10682 / NRRL B-4536 / VPI 7372) (Clostridium thermocellum).